A 69-amino-acid polypeptide reads, in one-letter code: Small, acid-soluble spore protein I (69 aa).

This sequence belongs to the SspI family.

It localises to the spore core. This chain is Small, acid-soluble spore protein I, found in Shouchella clausii (strain KSM-K16) (Alkalihalobacillus clausii).